A 725-amino-acid chain; its full sequence is Exocyst complex component 8 (725 aa).

S19 bears the Phosphoserine mark. Residues 116-159 (AASGGEEGGGGAGGRDQLRGQTGFFPSPGGASRDGSGPGEEGKQ) form a disordered region. Positions 120 to 129 (GEEGGGGAGG) are enriched in gly residues. In terms of domain architecture, PH spans 182–282 (YLVYNGDLVE…WLEVLEETKR (101 aa)). The interval 285–322 (SEKRRREQEEAAAPRGPPQVTPKASNPFEDEDDDEPTV) is disordered. A compositionally biased stretch (acidic residues) spans 312–322 (FEDEDDDEPTV).

This sequence belongs to the EXO84 family. The exocyst complex is composed of EXOC1, EXOC2, EXOC3, EXOC4, EXOC5, EXOC6, EXOC7 and EXOC8. Interacts (via PH domain) with GTP-bound RALA and RALB. Interacts with SH3BP1; required for the localization of both SH3BP1 and the exocyst to the leading edge of migrating cells.

The protein resides in the cytoplasm. It localises to the perinuclear region. It is found in the cell projection. The protein localises to the growth cone. In terms of biological role, component of the exocyst complex involved in the docking of exocytic vesicles with fusion sites on the plasma membrane. The sequence is that of Exocyst complex component 8 (EXOC8) from Bos taurus (Bovine).